We begin with the raw amino-acid sequence, 82 residues long: Large ribosomal subunit protein bL31B (82 aa).

The protein belongs to the bacterial ribosomal protein bL31 family. Type B subfamily. In terms of assembly, part of the 50S ribosomal subunit.

This Proteus mirabilis (strain HI4320) protein is Large ribosomal subunit protein bL31B.